Consider the following 859-residue polypeptide: Protein EFR3 homolog (859 aa).

Disordered stretches follow at residues 638-657 and 697-724; these read DDPL…TPRT and RDGN…PDGY. Residues 704–722 are compositionally biased toward basic and acidic residues; the sequence is WQREDGQNFDSTDGRESPD.

Belongs to the EFR3 family.

This chain is Protein EFR3 homolog, found in Caenorhabditis briggsae.